Consider the following 88-residue polypeptide: Small ribosomal subunit protein bS18B (88 aa).

The protein belongs to the bacterial ribosomal protein bS18 family. As to quaternary structure, part of the 30S ribosomal subunit. Forms a tight heterodimer with protein bS6.

Its function is as follows. Binds as a heterodimer with protein bS6 to the central domain of the 16S rRNA, where it helps stabilize the platform of the 30S subunit. The polypeptide is Small ribosomal subunit protein bS18B (Mycolicibacterium paratuberculosis (strain ATCC BAA-968 / K-10) (Mycobacterium paratuberculosis)).